A 120-amino-acid polypeptide reads, in one-letter code: NAD(P)H-quinone oxidoreductase subunit 3, chloroplastic (120 aa).

Transmembrane regions (helical) follow at residues 9-29 (IFWTFLIIASLIPILAFWISG), 64-84 (MFALVFVVFDVETVFLYPWAM), and 88-108 (VLGVSVFIEAFIFVLILVVGL).

Belongs to the complex I subunit 3 family. NDH is composed of at least 16 different subunits, 5 of which are encoded in the nucleus.

The protein resides in the plastid. The protein localises to the chloroplast thylakoid membrane. The catalysed reaction is a plastoquinone + NADH + (n+1) H(+)(in) = a plastoquinol + NAD(+) + n H(+)(out). It catalyses the reaction a plastoquinone + NADPH + (n+1) H(+)(in) = a plastoquinol + NADP(+) + n H(+)(out). Functionally, NDH shuttles electrons from NAD(P)H:plastoquinone, via FMN and iron-sulfur (Fe-S) centers, to quinones in the photosynthetic chain and possibly in a chloroplast respiratory chain. The immediate electron acceptor for the enzyme in this species is believed to be plastoquinone. Couples the redox reaction to proton translocation, and thus conserves the redox energy in a proton gradient. This chain is NAD(P)H-quinone oxidoreductase subunit 3, chloroplastic, found in Lolium perenne (Perennial ryegrass).